Consider the following 219-residue polypeptide: RNA-free ribonuclease P (219 aa).

This sequence belongs to the HARP family.

It catalyses the reaction Endonucleolytic cleavage of RNA, removing 5'-extranucleotides from tRNA precursor.. RNA-free RNase P that catalyzes the removal of the 5'-leader sequence from pre-tRNA to produce the mature 5'-terminus. The sequence is that of RNA-free ribonuclease P from Staphylothermus marinus (strain ATCC 43588 / DSM 3639 / JCM 9404 / F1).